Here is a 92-residue protein sequence, read N- to C-terminus: Putative pterin-4-alpha-carbinolamine dehydratase (92 aa).

This sequence belongs to the pterin-4-alpha-carbinolamine dehydratase family.

The enzyme catalyses (4aS,6R)-4a-hydroxy-L-erythro-5,6,7,8-tetrahydrobiopterin = (6R)-L-erythro-6,7-dihydrobiopterin + H2O. The protein is Putative pterin-4-alpha-carbinolamine dehydratase of Acidobacterium capsulatum (strain ATCC 51196 / DSM 11244 / BCRC 80197 / JCM 7670 / NBRC 15755 / NCIMB 13165 / 161).